The sequence spans 698 residues: D-(-)-3-hydroxybutyrate oligomer hydrolase (698 aa).

Positions 1 to 32 (MTTIRGGSRRASLPALALLGVLLGACHSDDNA) are cleaved as a signal peptide. The active-site Charge relay system is the Ser-310.

Belongs to the D-(-)-3-hydroxybutyrate oligomer hydrolase family.

It localises to the secreted. It catalyses the reaction (3R)-hydroxybutanoate dimer + H2O = 2 (R)-3-hydroxybutanoate + H(+). Its pathway is lipid metabolism; butanoate metabolism. Its function is as follows. Participates in the degradation of poly-3-hydroxybutyrate (PHB). It works downstream of poly(3-hydroxybutyrate) depolymerase, hydrolyzing D(-)-3-hydroxybutyrate oligomers of various length (3HB-oligomers) into 3HB-monomers. This Burkholderia thailandensis (strain ATCC 700388 / DSM 13276 / CCUG 48851 / CIP 106301 / E264) protein is D-(-)-3-hydroxybutyrate oligomer hydrolase.